The primary structure comprises 400 residues: Coenzyme A biosynthesis bifunctional protein CoaBC (400 aa).

The interval M1–N190 is phosphopantothenoylcysteine decarboxylase. The active-site Proton donor is C158. A phosphopantothenate--cysteine ligase region spans residues V191 to L400. CTP-binding positions include G273–A275, D279, K289, P305–I308, F324, K338, and K342.

This sequence in the N-terminal section; belongs to the HFCD (homo-oligomeric flavin containing Cys decarboxylase) superfamily. It in the C-terminal section; belongs to the PPC synthetase family. Mg(2+) is required as a cofactor. It depends on FMN as a cofactor.

It carries out the reaction N-[(R)-4-phosphopantothenoyl]-L-cysteine + H(+) = (R)-4'-phosphopantetheine + CO2. The catalysed reaction is (R)-4'-phosphopantothenate + L-cysteine + CTP = N-[(R)-4-phosphopantothenoyl]-L-cysteine + CMP + diphosphate + H(+). It participates in cofactor biosynthesis; coenzyme A biosynthesis; CoA from (R)-pantothenate: step 2/5. It functions in the pathway cofactor biosynthesis; coenzyme A biosynthesis; CoA from (R)-pantothenate: step 3/5. Catalyzes two sequential steps in the biosynthesis of coenzyme A. In the first step cysteine is conjugated to 4'-phosphopantothenate to form 4-phosphopantothenoylcysteine. In the second step the latter compound is decarboxylated to form 4'-phosphopantotheine. The polypeptide is Coenzyme A biosynthesis bifunctional protein CoaBC (Haemophilus influenzae (strain ATCC 51907 / DSM 11121 / KW20 / Rd)).